The following is a 77-amino-acid chain: RNA-binding protein Hfq (77 aa).

The Sm domain occupies 10–70 (DAFLNHVRKT…ISTVMPAQPI (61 aa)).

It belongs to the Hfq family. As to quaternary structure, homohexamer.

Its function is as follows. RNA chaperone that binds small regulatory RNA (sRNAs) and mRNAs to facilitate mRNA translational regulation in response to envelope stress, environmental stress and changes in metabolite concentrations. Also binds with high specificity to tRNAs. This is RNA-binding protein Hfq from Jannaschia sp. (strain CCS1).